Reading from the N-terminus, the 386-residue chain is Branched-chain-amino-acid aminotransferase, cytosolic (386 aa).

N-acetylmethionine is present on methionine 1. Lysine 222 is subject to N6-(pyridoxal phosphate)lysine.

This sequence belongs to the class-IV pyridoxal-phosphate-dependent aminotransferase family. Homodimer. It depends on pyridoxal 5'-phosphate as a cofactor. Expressed in brain and kidney. Overexpressed in MYC-induced brain tumors, lymphomas, as well as in a teratocarcinoma cell line.

The protein localises to the cytoplasm. It catalyses the reaction L-leucine + 2-oxoglutarate = 4-methyl-2-oxopentanoate + L-glutamate. It carries out the reaction L-isoleucine + 2-oxoglutarate = (S)-3-methyl-2-oxopentanoate + L-glutamate. The enzyme catalyses L-valine + 2-oxoglutarate = 3-methyl-2-oxobutanoate + L-glutamate. Functionally, catalyzes the first reaction in the catabolism of the essential branched chain amino acids leucine, isoleucine, and valine. This Mus musculus (Mouse) protein is Branched-chain-amino-acid aminotransferase, cytosolic (Bcat1).